Reading from the N-terminus, the 176-residue chain is NAD(P)H-quinone oxidoreductase subunit 6, chloroplastic (176 aa).

Helical transmembrane passes span 10 to 30 (ILLV…VLFT), 32 to 52 (PIFS…FHIL), 61 to 81 (AQLL…VMFM), 92 to 112 (LWTV…FSLI), and 152 to 172 (FYLP…GAIA).

Belongs to the complex I subunit 6 family. NDH is composed of at least 16 different subunits, 5 of which are encoded in the nucleus.

It is found in the plastid. The protein resides in the chloroplast thylakoid membrane. The catalysed reaction is a plastoquinone + NADH + (n+1) H(+)(in) = a plastoquinol + NAD(+) + n H(+)(out). The enzyme catalyses a plastoquinone + NADPH + (n+1) H(+)(in) = a plastoquinol + NADP(+) + n H(+)(out). Functionally, NDH shuttles electrons from NAD(P)H:plastoquinone, via FMN and iron-sulfur (Fe-S) centers, to quinones in the photosynthetic chain and possibly in a chloroplast respiratory chain. The immediate electron acceptor for the enzyme in this species is believed to be plastoquinone. Couples the redox reaction to proton translocation, and thus conserves the redox energy in a proton gradient. The sequence is that of NAD(P)H-quinone oxidoreductase subunit 6, chloroplastic (ndhG) from Drimys granadensis.